We begin with the raw amino-acid sequence, 541 residues long: Coiled-coil domain-containing protein 116 (541 aa).

Residues 79-102 (QVLDSLQTVVEQATERLAAMKTEA) adopt a coiled-coil conformation. Residues 346-397 (LPGNSDLLQPSSKASIPTNREARGEPCDSLTTAYSPKTSHRKSKGRRGSPPN) form a disordered region. The span at 351–363 (DLLQPSSKASIPT) shows a compositional bias: polar residues. Positions 383–392 (TSHRKSKGRR) are enriched in basic residues. Position 394 is a phosphoserine (serine 394).

It is found in the cytoplasm. The protein localises to the cytoskeleton. It localises to the microtubule organizing center. Its subcellular location is the centrosome. The chain is Coiled-coil domain-containing protein 116 (Ccdc116) from Mus musculus (Mouse).